Reading from the N-terminus, the 679-residue chain is Sodium-dependent phosphate transporter 1 (679 aa).

6 helical membrane passes run 21–41, 62–82, 100–120, 158–178, 203–223, and 230–250; these read YLWM…SVGA, ACIL…AKVS, GLLM…QLVA, IVMS…ILFF, ACTV…LLGF, and GTIL…WFFV. Phosphoserine is present on residues Ser-265 and Ser-269. Residues 268–288 form a disordered region; it reads ESPLMEKKNSLKEDHEETKLS. The span at 271–286 shows a compositional bias: basic and acidic residues; the sequence is LMEKKNSLKEDHEETK. The next 4 membrane-spanning stretches (helical) occupy residues 511 to 531, 558 to 578, 600 to 620, and 650 to 670; these read VSLL…FAHG, VATP…GLWV, FSIE…GLPI, and IFMA…AIMA. Positions 550–558 are a; it reads DTGDVSSKV.

This sequence belongs to the inorganic phosphate transporter (PiT) (TC 2.A.20) family.

The protein resides in the cell membrane. The catalysed reaction is 2 Na(+)(out) + phosphate(out) = 2 Na(+)(in) + phosphate(in). Functionally, sodium-phosphate symporter which preferentially transports the monovalent form of phosphate with a stoichiometry of two sodium ions per phosphate ion. May play a role in extracellular matrix and cartilage calcification as well as in vascular calcification. Essential for cell proliferation but this function is independent of its phosphate transporter activity. The chain is Sodium-dependent phosphate transporter 1 (SLC20A1) from Pongo abelii (Sumatran orangutan).